The primary structure comprises 468 residues: 6-phospho-beta-galactosidase (468 aa).

Residues glutamine 19, histidine 116, asparagine 159, glutamate 160, and asparagine 297 each coordinate D-galactose 6-phosphate. Glutamate 160 (proton donor) is an active-site residue. Glutamate 375 acts as the Nucleophile in catalysis. Positions 428, 429, 435, and 437 each coordinate D-galactose 6-phosphate.

This sequence belongs to the glycosyl hydrolase 1 family.

The enzyme catalyses a 6-phospho-beta-D-galactoside + H2O = D-galactose 6-phosphate + an alcohol. Its pathway is carbohydrate metabolism; lactose degradation; D-galactose 6-phosphate and beta-D-glucose from lactose 6-phosphate: step 1/1. The chain is 6-phospho-beta-galactosidase from Lactococcus lactis subsp. lactis (Streptococcus lactis).